Here is a 223-residue protein sequence, read N- to C-terminus: Sigma non-opioid intracellular receptor 1 (223 aa).

At 1-7 the chain is on the lumenal side; sequence MAVLSSR. Residues 8 to 29 form a helical membrane-spanning segment; the sequence is AMRAALGLAVLAVVIQLLRTWL. Topologically, residues 30–223 are cytoplasmic; it reads SSKSYLFNQK…HTYLSELGLS (194 aa). Residues 98-105 form an important for ligand-binding region; the sequence is SLTEYILL. The interval 176–223 is C-terminal hydrophobic region; sequence FIPSTMGFALADTIFSTQDFCTLFYTFRIYARCLLLETHTYLSELGLS.

It belongs to the ERG2 family. In terms of assembly, homotrimer.

The protein resides in the nucleus inner membrane. It localises to the nucleus outer membrane. It is found in the nucleus envelope. The protein localises to the cytoplasmic vesicle. Its subcellular location is the endoplasmic reticulum membrane. The protein resides in the membrane. Functionally, may function in lipid transport from the endoplasmic reticulum and be involved in a wide array of cellular functions probably through regulation of the biogenesis of lipid microdomains at the plasma membrane. May regulate calcium efflux at the endoplasmic reticulum. The sequence is that of Sigma non-opioid intracellular receptor 1 (SIGMAR1) from Taricha granulosa (Roughskin newt).